Here is a 508-residue protein sequence, read N- to C-terminus: Cyclic AMP-responsive element-binding protein 5 (508 aa).

A C2H2-type zinc finger spans residues Phe-16–His-40. Residue Lys-50 forms a Glycyl lysine isopeptide (Lys-Gly) (interchain with G-Cter in SUMO2) linkage. A phosphothreonine mark is found at Thr-59 and Thr-61. Ser-137 carries the post-translational modification Phosphoserine. The tract at residues Arg-265–Arg-391 is disordered. Composition is skewed to basic residues over residues His-271–Gln-280 and Pro-289–His-326. Positions Thr-337 to Ala-346 are enriched in polar residues. Over residues Thr-347–Gln-357 the composition is skewed to low complexity. Over residues Val-369–Arg-386 the composition is skewed to basic and acidic residues. The 64-residue stretch at Asp-375 to His-438 folds into the bZIP domain. The segment at Arg-377 to Lys-397 is basic motif. The leucine-zipper stretch occupies residues Leu-403–Leu-431. Positions Glu-449 to Cys-468 are disordered.

Belongs to the bZIP family. Binds DNA as a homodimer or as a heterodimer with JUN or ATF2/CREBP1.

It is found in the nucleus. Its function is as follows. Binds to the cAMP response element and activates transcription. The sequence is that of Cyclic AMP-responsive element-binding protein 5 (CREB5) from Homo sapiens (Human).